The sequence spans 398 residues: Sphingosine 1-phosphate receptor 5 (398 aa).

Residues 1–40 (MESGLLRPAPVSEVIVLHYNYTGKLRGARYQPGAGLRADA) are Extracellular-facing. An N-linked (GlcNAc...) asparagine glycan is attached at N20. Residues 41–61 (VVCLAVCAFIVLENLAVLLVL) traverse the membrane as a helical segment. Residues 62-70 (GRHPRFHAP) are Cytoplasmic-facing. A helical membrane pass occupies residues 71–91 (MFLLLGSLTLSDLLAGAAYAA). The Extracellular portion of the chain corresponds to 92–111 (NILLSGPLTLKLSPALWFAR). A helical transmembrane segment spans residues 112–132 (EGGVFVALTASVLSLLAIALE). The Cytoplasmic segment spans residues 133–151 (RSLTMARRGPAPVSSRGRT). A helical transmembrane segment spans residues 152–172 (LAMAAAAWGVSLLLGLLPALG). Topologically, residues 173 to 192 (WNCLGRLDACSTVLPLYAKA) are extracellular. A helical transmembrane segment spans residues 193–213 (YVLFCVLAFVGILAAICALYA). Residues 214–252 (RIYCQVRANARRLPARPGTAGTTSTRARRKPRSLALLRT) are Cytoplasmic-facing. The helical transmembrane segment at 253 to 273 (LSVVLLAFVACWGPLFLLLLL) threads the bilayer. Over 274–287 (DVACPARTCPVLLQ) the chain is Extracellular. The helical transmembrane segment at 288–308 (ADPFLGLAMANSLLNPIIYTL) threads the bilayer. The Cytoplasmic portion of the chain corresponds to 309-398 (TNRDLRHALL…RTLVSEPAAD (90 aa)). C323 carries the S-palmitoyl cysteine lipid modification. The segment at 329–398 (GRDPSGSQQS…RTLVSEPAAD (70 aa)) is disordered. The span at 333–347 (SGSQQSASAAEASGG) shows a compositional bias: low complexity. S381 bears the Phosphoserine mark.

It belongs to the G-protein coupled receptor 1 family. Widely expressed in the brain, most prominently in the corpus callosum, which is predominantly white matter. Detected in spleen, peripheral blood leukocytes, placenta, lung, aorta and fetal spleen. Low-level signal detected in many tissue extracts. Overexpressed in leukemic large granular lymphocytes. Isoform 1 is predominantly expressed in peripheral tissues. Isoform 2 is expressed in brain, spleen and peripheral blood leukocytes.

The protein localises to the cell membrane. Receptor for the lysosphingolipid sphingosine 1-phosphate (S1P). S1P is a bioactive lysophospholipid that elicits diverse physiological effect on most types of cells and tissues. Is coupled to both the G(i/0)alpha and G(12) subclass of heteromeric G-proteins. May play a regulatory role in the transformation of radial glial cells into astrocytes and may affect proliferative activity of these cells. This is Sphingosine 1-phosphate receptor 5 (S1PR5) from Homo sapiens (Human).